The chain runs to 270 residues: Formamidopyrimidine-DNA glycosylase (270 aa).

Proline 2 serves as the catalytic Schiff-base intermediate with DNA. Glutamate 3 (proton donor) is an active-site residue. The active-site Proton donor; for beta-elimination activity is the lysine 58. DNA contacts are provided by histidine 91, arginine 109, and arginine 151. Residues 236 to 270 (LVYGRGGEACKTCQKPLKEIRMNDRTTVYCVTCQQ) form an FPG-type zinc finger. Residue arginine 260 is the Proton donor; for delta-elimination activity of the active site.

It belongs to the FPG family. Monomer. Requires Zn(2+) as cofactor.

It carries out the reaction Hydrolysis of DNA containing ring-opened 7-methylguanine residues, releasing 2,6-diamino-4-hydroxy-5-(N-methyl)formamidopyrimidine.. The enzyme catalyses 2'-deoxyribonucleotide-(2'-deoxyribose 5'-phosphate)-2'-deoxyribonucleotide-DNA = a 3'-end 2'-deoxyribonucleotide-(2,3-dehydro-2,3-deoxyribose 5'-phosphate)-DNA + a 5'-end 5'-phospho-2'-deoxyribonucleoside-DNA + H(+). Its function is as follows. Involved in base excision repair of DNA damaged by oxidation or by mutagenic agents. Acts as a DNA glycosylase that recognizes and removes damaged bases. Has a preference for oxidized purines, such as 7,8-dihydro-8-oxoguanine (8-oxoG). Has AP (apurinic/apyrimidinic) lyase activity and introduces nicks in the DNA strand. Cleaves the DNA backbone by beta-delta elimination to generate a single-strand break at the site of the removed base with both 3'- and 5'-phosphates. The polypeptide is Formamidopyrimidine-DNA glycosylase (Cellvibrio japonicus (strain Ueda107) (Pseudomonas fluorescens subsp. cellulosa)).